A 288-amino-acid polypeptide reads, in one-letter code: Solute carrier family 25 member 47-B (288 aa).

Solcar repeat units follow at residues 1 to 83, 99 to 191, and 199 to 286; these read MHLA…ILQF, AHIF…ICEI, and PGWP…VVRL. Transmembrane regions (helical) follow at residues 3 to 23, 58 to 75, 101 to 121, 175 to 195, 199 to 219, and 257 to 277; these read LADF…GYPL, GMSM…LVFG, IFLA…PADI, GPSF…LTTE, PGWP…WAVG, and VLFR…MSVF.

It belongs to the mitochondrial carrier (TC 2.A.29) family.

It localises to the mitochondrion inner membrane. This Danio rerio (Zebrafish) protein is Solute carrier family 25 member 47-B (slc25a47b).